Here is a 119-residue protein sequence, read N- to C-terminus: MIQKNTLLDVADNSGARKVLCIGLLNGKKSASVGDVIVVSTKVITPRGKVSKGKVYKAVVVRVKKAVRRLDGSIIRFSSNAVVLINDQGDPLGTRVFGPIKKLPFGLFSKVMSLAVEVL.

The protein belongs to the universal ribosomal protein uL14 family. Part of the 50S ribosomal subunit. Forms a cluster with proteins L3 and L19. In the 70S ribosome, L14 and L19 interact and together make contacts with the 16S rRNA in bridges B5 and B8.

Its function is as follows. Binds to 23S rRNA. Forms part of two intersubunit bridges in the 70S ribosome. In Ehrlichia canis (strain Jake), this protein is Large ribosomal subunit protein uL14.